The primary structure comprises 59 residues: Large ribosomal subunit protein bL33 (59 aa).

This sequence belongs to the bacterial ribosomal protein bL33 family.

The sequence is that of Large ribosomal subunit protein bL33 from Borrelia recurrentis (strain A1).